Consider the following 558-residue polypeptide: Aspartate--tRNA ligase 2, cytoplasmic (558 aa).

A compositionally biased stretch (low complexity) spans 1–18; that stretch reads MSSESEIPPLSSSTAAAE. Positions 1 to 57 are disordered; sequence MSSESEIPPLSSSTAAAEESGEKTSKKAAKKEAAKLEKLRRRQEQEEATRRTASISL. N-acetylserine is present on serine 2. The span at 20–50 shows a compositional bias: basic and acidic residues; it reads SGEKTSKKAAKKEAAKLEKLRRRQEQEEATR. Residues 110 to 195 constitute a DNA-binding region (OB); it reads VLIRGRVHTN…QVEIQVRKVY (86 aa). Glutamate 286 lines the L-aspartate pocket. Positions 308-311 are aspartate; the sequence is QLHK. Position 330 (arginine 330) interacts with L-aspartate. Residues 330 to 332, 338 to 340, and glutamate 481 contribute to the ATP site; these read RAE and RHL. Mg(2+) contacts are provided by glutamate 481 and serine 484. 2 residues coordinate L-aspartate: serine 484 and arginine 488. 529-532 is an ATP binding site; the sequence is GLER.

This sequence belongs to the class-II aminoacyl-tRNA synthetase family. Type 2 subfamily.

The protein resides in the cytoplasm. Its subcellular location is the cytosol. It is found in the endoplasmic reticulum. It carries out the reaction tRNA(Asp) + L-aspartate + ATP = L-aspartyl-tRNA(Asp) + AMP + diphosphate. Catalyzes the specific attachment of an amino acid to its cognate tRNA in a 2 step reaction: the amino acid (AA) is first activated by ATP to form AA-AMP and then transferred to the acceptor end of the tRNA. Involved in the perception of beta-aminobutyric acid (BABA) and required for BABA priming effect in disease resistance. The sequence is that of Aspartate--tRNA ligase 2, cytoplasmic from Arabidopsis thaliana (Mouse-ear cress).